Here is a 317-residue protein sequence, read N- to C-terminus: Beta-ketoacyl-[acyl-carrier-protein] synthase III (317 aa).

Catalysis depends on residues Cys112 and His244. Residues 245 to 249 (QANLR) form an ACP-binding region. Residue Asn274 is part of the active site.

The protein belongs to the thiolase-like superfamily. FabH family. Homodimer.

The protein resides in the cytoplasm. It catalyses the reaction malonyl-[ACP] + acetyl-CoA + H(+) = 3-oxobutanoyl-[ACP] + CO2 + CoA. It participates in lipid metabolism; fatty acid biosynthesis. In terms of biological role, catalyzes the condensation reaction of fatty acid synthesis by the addition to an acyl acceptor of two carbons from malonyl-ACP. Catalyzes the first condensation reaction which initiates fatty acid synthesis and may therefore play a role in governing the total rate of fatty acid production. Possesses both acetoacetyl-ACP synthase and acetyl transacylase activities. Its substrate specificity determines the biosynthesis of branched-chain and/or straight-chain of fatty acids. This is Beta-ketoacyl-[acyl-carrier-protein] synthase III from Serratia proteamaculans (strain 568).